The following is a 207-amino-acid chain: Small ribosomal subunit protein uS4 (207 aa).

A disordered region spans residues 33 to 54 (KLDSKPGQHGRTSGARTSDYGN). Positions 42 to 53 (GRTSGARTSDYG) are enriched in polar residues. The S4 RNA-binding domain occupies 97-157 (SRLDNVVYRM…EKSKKQVRIA (61 aa)).

Belongs to the universal ribosomal protein uS4 family. As to quaternary structure, part of the 30S ribosomal subunit. Contacts protein S5. The interaction surface between S4 and S5 is involved in control of translational fidelity.

Its function is as follows. One of the primary rRNA binding proteins, it binds directly to 16S rRNA where it nucleates assembly of the body of the 30S subunit. With S5 and S12 plays an important role in translational accuracy. This is Small ribosomal subunit protein uS4 from Ralstonia pickettii (strain 12J).